We begin with the raw amino-acid sequence, 516 residues long: Exodeoxyribonuclease 7 large subunit (516 aa).

This sequence belongs to the XseA family. As to quaternary structure, heterooligomer composed of large and small subunits.

It localises to the cytoplasm. The catalysed reaction is Exonucleolytic cleavage in either 5'- to 3'- or 3'- to 5'-direction to yield nucleoside 5'-phosphates.. Its function is as follows. Bidirectionally degrades single-stranded DNA into large acid-insoluble oligonucleotides, which are then degraded further into small acid-soluble oligonucleotides. The polypeptide is Exodeoxyribonuclease 7 large subunit (Chlamydia trachomatis serovar A (strain ATCC VR-571B / DSM 19440 / HAR-13)).